The sequence spans 226 residues: UPF0319 protein YPO1442/y2728/YP_1333 (226 aa).

The signal sequence occupies residues 1-20 (MKLGLVAGMLAVCFSFSSVA).

This sequence belongs to the UPF0319 family.

The chain is UPF0319 protein YPO1442/y2728/YP_1333 from Yersinia pestis.